We begin with the raw amino-acid sequence, 371 residues long: Bifunctional enzyme IspD/IspF (371 aa).

The interval 1 to 210 (MSEISLIMLA…LDLPTPSFEI (210 aa)) is 2-C-methyl-D-erythritol 4-phosphate cytidylyltransferase. The tract at residues 211-371 (FTGNGFDVHE…NLKYFDWTRL (161 aa)) is 2-C-methyl-D-erythritol 2,4-cyclodiphosphate synthase. Residues D217 and H219 each coordinate a divalent metal cation. 4-CDP-2-C-methyl-D-erythritol 2-phosphate is bound by residues 217–219 (DVH) and 243–244 (HS). H251 is a binding site for a divalent metal cation. Residues 265-267 (DIG), 270-274 (YPDTD), 341-344 (TTTE), F348, and R351 each bind 4-CDP-2-C-methyl-D-erythritol 2-phosphate.

This sequence in the N-terminal section; belongs to the IspD/TarI cytidylyltransferase family. IspD subfamily. In the C-terminal section; belongs to the IspF family. A divalent metal cation serves as cofactor.

The enzyme catalyses 2-C-methyl-D-erythritol 4-phosphate + CTP + H(+) = 4-CDP-2-C-methyl-D-erythritol + diphosphate. The catalysed reaction is 4-CDP-2-C-methyl-D-erythritol 2-phosphate = 2-C-methyl-D-erythritol 2,4-cyclic diphosphate + CMP. It participates in isoprenoid biosynthesis; isopentenyl diphosphate biosynthesis via DXP pathway; isopentenyl diphosphate from 1-deoxy-D-xylulose 5-phosphate: step 2/6. The protein operates within isoprenoid biosynthesis; isopentenyl diphosphate biosynthesis via DXP pathway; isopentenyl diphosphate from 1-deoxy-D-xylulose 5-phosphate: step 4/6. In terms of biological role, bifunctional enzyme that catalyzes the formation of 4-diphosphocytidyl-2-C-methyl-D-erythritol from CTP and 2-C-methyl-D-erythritol 4-phosphate (MEP) (IspD), and catalyzes the conversion of 4-diphosphocytidyl-2-C-methyl-D-erythritol 2-phosphate (CDP-ME2P) to 2-C-methyl-D-erythritol 2,4-cyclodiphosphate (ME-CPP) with a corresponding release of cytidine 5-monophosphate (CMP) (IspF). The protein is Bifunctional enzyme IspD/IspF of Campylobacter jejuni subsp. jejuni serotype O:6 (strain 81116 / NCTC 11828).